We begin with the raw amino-acid sequence, 273 residues long: Proteasome subunit beta (273 aa).

Polar residues predominate over residues 1–19; the sequence is MQESTANKVAANATSSFTE. Positions 1–23 are disordered; sequence MQESTANKVAANATSSFTEHLQR. Residues 1-50 constitute a propeptide, removed in mature form; by autocatalysis; it reads MQESTANKVAANATSSFTEHLQRDRPELLPFNRSGQGSATAAAPLQVPHA. Residue threonine 51 is the Nucleophile of the active site.

It belongs to the peptidase T1B family. As to quaternary structure, the 20S proteasome core is composed of 14 alpha and 14 beta subunits that assemble into four stacked heptameric rings, resulting in a barrel-shaped structure. The two inner rings, each composed of seven catalytic beta subunits, are sandwiched by two outer rings, each composed of seven alpha subunits. The catalytic chamber with the active sites is on the inside of the barrel. Has a gated structure, the ends of the cylinder being occluded by the N-termini of the alpha-subunits. Is capped by the proteasome-associated ATPase, ARC.

It localises to the cytoplasm. The catalysed reaction is Cleavage of peptide bonds with very broad specificity.. Its pathway is protein degradation; proteasomal Pup-dependent pathway. The formation of the proteasomal ATPase ARC-20S proteasome complex, likely via the docking of the C-termini of ARC into the intersubunit pockets in the alpha-rings, may trigger opening of the gate for substrate entry. Interconversion between the open-gate and close-gate conformations leads to a dynamic regulation of the 20S proteasome proteolysis activity. Its function is as follows. Component of the proteasome core, a large protease complex with broad specificity involved in protein degradation. The sequence is that of Proteasome subunit beta from Pseudarthrobacter chlorophenolicus (strain ATCC 700700 / DSM 12829 / CIP 107037 / JCM 12360 / KCTC 9906 / NCIMB 13794 / A6) (Arthrobacter chlorophenolicus).